The chain runs to 509 residues: Histidine--tRNA ligase, cytoplasmic (509 aa).

Ala-2 bears the N-acetylalanine mark. In terms of domain architecture, WHEP-TRS spans 3-59; it reads ERAALEELVKLQGERVRGLKQQKASAELIEEEVAKLLKLKAQLGPDESKQKFVLKTP. Ser-66 is subject to Phosphoserine. L-histidine is bound by residues 130 to 132, Arg-157, Gln-173, Asp-177, Arg-326, and 330 to 331; these read DLT and YY. A Phosphoserine modification is found at Ser-356.

This sequence belongs to the class-II aminoacyl-tRNA synthetase family. In terms of assembly, homodimer.

The protein localises to the cytoplasm. It catalyses the reaction tRNA(His) + L-histidine + ATP = L-histidyl-tRNA(His) + AMP + diphosphate + H(+). Its function is as follows. Catalyzes the ATP-dependent ligation of histidine to the 3'-end of its cognate tRNA, via the formation of an aminoacyl-adenylate intermediate (His-AMP). Plays a role in axon guidance. In Pongo abelii (Sumatran orangutan), this protein is Histidine--tRNA ligase, cytoplasmic (HARS1).